The primary structure comprises 176 residues: Gamma-crystallin M2 (176 aa).

Beta/gamma crystallin 'Greek key' domains follow at residues 2 to 40 and 41 to 83; these read GKVIFYEDRNFQGRHYECSSDCADLSPYFSRCNSIRVEG and GCWV…RIIP. The tract at residues 84–88 is connecting peptide; the sequence is QYRGS. Beta/gamma crystallin 'Greek key' domains lie at 89–129 and 130–172; these read YRMR…HVMD and GYWI…RRIM.

Belongs to the beta/gamma-crystallin family. As to quaternary structure, monomer.

Its function is as follows. Crystallins are the dominant structural components of the vertebrate eye lens. The polypeptide is Gamma-crystallin M2 (GM2) (Chiloscyllium indicum (Slender bamboo shark)).